The primary structure comprises 141 residues: Hemoglobin subunit alpha-2 (141 aa).

In terms of domain architecture, Globin spans 1–141 (VLSSQDKANV…VKHVLTSKYR (141 aa)). His-58 lines the O2 pocket. A heme b-binding site is contributed by His-87.

Belongs to the globin family. As to quaternary structure, minor hemoglobin is a heterotetramer of two alpha-2 chains and two beta-2 chains. As to expression, red blood cells.

Its function is as follows. Involved in oxygen transport from the lung to the various peripheral tissues. The polypeptide is Hemoglobin subunit alpha-2 (Triturus cristatus (Great crested newt)).